We begin with the raw amino-acid sequence, 503 residues long: Annexin A11 (503 aa).

Pro residues-rich tracts occupy residues 80–117 and 123–167; these read GYPPVPPGGFGQPPPAQQPVPPYGMYPPPGGNPPPGMP and PGAP…PVPS. Positions 80-172 are disordered; that stretch reads GYPPVPPGGF…QPVPSYPGYS (93 aa). Annexin repeat units follow at residues 198-269, 270-341, 353-425, and 429-500; these read FDPL…ALMK, TPVL…SLSQ, SLVQ…AVVK, and NTPA…KICG. N6-acetyllysine is present on residues lysine 246 and lysine 253. Lysine 477 is modified (N6-acetyllysine).

This sequence belongs to the annexin family. Interacts with S100A6. Interacts with PDCD6 in a calcium-dependent manner. Interacts with KIF23 during cytokinesis.

The protein localises to the cytoplasm. Its subcellular location is the melanosome. It localises to the nucleus envelope. It is found in the nucleus. The protein resides in the nucleoplasm. The protein localises to the cytoskeleton. Its subcellular location is the spindle. Required for midbody formation and completion of the terminal phase of cytokinesis. Binds specifically to calcyclin in a calcium-dependent manner. This Mus musculus (Mouse) protein is Annexin A11 (Anxa11).